The primary structure comprises 398 residues: Aspartic protease 3 (398 aa).

The first 17 residues, 1–17, serve as a signal peptide directing secretion; the sequence is MSGRVFLLLALVALASA. The propeptide at 18-55 is removed in mature form; the sequence is IQRIKLEKRTYTREQYKFGSIQEHLKAKYVPGYIPNKD. The region spanning 69–392 is the Peptidase A1 domain; that stretch reads YYGPVTIGTP…DHGNKRVGFA (324 aa). Residue Asp87 is part of the active site. The cysteines at positions 100 and 107 are disulfide-linked. Asp279 is an active-site residue. Cys313 and Cys351 are disulfide-bonded. An N-linked (GlcNAc...) asparagine glycan is attached at Asn321.

It belongs to the peptidase A1 family. Highly expressed in intestine and to a lower extent in body wall muscles, hypodermis and neurons.

The protein resides in the cytoplasm. Its subcellular location is the lysosome. The protein localises to the secreted. Its function is as follows. Aspartic protease. Part of the necrosis cell death pathway. Involved in neuronal cell degeneration. Involved in heat stress response. This is Aspartic protease 3 from Caenorhabditis elegans.